A 667-amino-acid chain; its full sequence is E3 ubiquitin-protein ligase Midline-1 (667 aa).

An RING-type zinc finger spans residues 10-60 (CPICLELLEDPLLLPCAHSLCFNCAHRILVSHCATNEPVESINAFQCPTCR). A phosphoserine mark is found at S92 and S96. 2 consecutive B box-type zinc fingers follow at residues 116–165 (KVLC…IEPI) and 172–212 (GLMC…VAAL). Zn(2+)-binding residues include C119, C122, C134, C137, C142, C145, H150, H159, C175, H178, C198, and H204. Residues 205 to 264 (RDHQVAALSERYDKLKQNLESNLTNLIKRNTELETLLAKLIQTCQHVEVNASRQEAKLTE) adopt a coiled-coil conformation. The region spanning 320–379 (LKENDHARFLQTAKNITERVSMATASSQVLIPEINLNDTFDTFALDFSREKKLLECLDYL) is the COS domain. The 104-residue stretch at 381–484 (APNPPTIREE…EPGKLKTNSQ (104 aa)) folds into the Fibronectin type-III domain. A compositionally biased stretch (polar residues) spans 471 to 485 (SRSSEPGKLKTNSQP). The interval 471-524 (SRSSEPGKLKTNSQPFKLDPKSAHRKLKVSHDNLTVERDESSSKKSHTPERFTS) is disordered. The B30.2/SPRY domain occupies 482 to 659 (NSQPFKLDPK…IITGLPIPDH (178 aa)). Basic and acidic residues predominate over residues 499–520 (VSHDNLTVERDESSSKKSHTPE). At S511 the chain carries Phosphoserine.

This sequence belongs to the TRIM/RBCC family. In terms of assembly, homodimer or heterodimer with MID2. Interacts with IGBP1.

It is found in the cytoplasm. The protein resides in the cytoskeleton. The enzyme catalyses S-ubiquitinyl-[E2 ubiquitin-conjugating enzyme]-L-cysteine + [acceptor protein]-L-lysine = [E2 ubiquitin-conjugating enzyme]-L-cysteine + N(6)-ubiquitinyl-[acceptor protein]-L-lysine.. Has E3 ubiquitin ligase activity towards IGBP1, promoting its monoubiquitination, which results in deprotection of the catalytic subunit of protein phosphatase PP2A, and its subsequent degradation by polyubiquitination. The chain is E3 ubiquitin-protein ligase Midline-1 (Mid1) from Mus spretus (Western Mediterranean mouse).